The sequence spans 179 residues: MSRIAKQPIVIPSDVSITLIGQMVIVKGSKGELKRLIHDSVLVKSVKSCLVFSSRINSSVKGWAQAGTARSLVNSMIHGVTVGFFKKLKLFGVGYRISINSSKNLNMSLGYSHIIEYVLPFGIFVESISQAEIIVKGINKQLVGQVAANLRAYRKSEPYKGKGIRYSNEIVRVKEAKKK.

The protein belongs to the universal ribosomal protein uL6 family. As to quaternary structure, part of the 50S ribosomal subunit.

In terms of biological role, this protein binds to the 23S rRNA, and is important in its secondary structure. It is located near the subunit interface in the base of the L7/L12 stalk, and near the tRNA binding site of the peptidyltransferase center. In Buchnera aphidicola subsp. Baizongia pistaciae (strain Bp), this protein is Large ribosomal subunit protein uL6.